A 142-amino-acid polypeptide reads, in one-letter code: Peptide methionine sulfoxide reductase MsrB (142 aa).

Residues 3–126 (KEELKKKLSP…NSAALRFIPF (124 aa)) enclose the MsrB domain. The Nucleophile role is filled by Cys-115.

This sequence belongs to the MsrB Met sulfoxide reductase family.

The catalysed reaction is L-methionyl-[protein] + [thioredoxin]-disulfide + H2O = L-methionyl-(R)-S-oxide-[protein] + [thioredoxin]-dithiol. This Lactococcus lactis subsp. cremoris (strain MG1363) protein is Peptide methionine sulfoxide reductase MsrB.